The primary structure comprises 812 residues: Probable inorganic carbon transporter subunit DabA (812 aa).

4 residues coordinate Zn(2+): C337, D339, H499, and C514.

The protein belongs to the inorganic carbon transporter (TC 9.A.2) DabA family. In terms of assembly, forms a complex with DabB. Zn(2+) serves as cofactor.

The protein resides in the cell inner membrane. Functionally, part of an energy-coupled inorganic carbon pump. The protein is Probable inorganic carbon transporter subunit DabA of Xanthomonas oryzae pv. oryzae (strain KACC10331 / KXO85).